Here is a 149-residue protein sequence, read N- to C-terminus: Calmodulin (149 aa).

Ala2 carries the post-translational modification N-acetylalanine. EF-hand domains follow at residues Glu8–Asn43, Pro44–Asp79, Asp81–Lys116, and Leu117–Lys149. Ca(2+)-binding residues include Asp21, Asp23, Asp25, Thr27, Glu32, Asp57, Asp59, Asn61, Thr63, Glu68, Asp94, Asp96, Asn98, and Glu105. The residue at position 116 (Lys116) is an N6,N6,N6-trimethyllysine. The Ca(2+) site is built by Asp130, Asp132, Asp134, Gln136, and Glu141.

The protein belongs to the calmodulin family.

Calmodulin mediates the control of a large number of enzymes, ion channels and other proteins by Ca(2+). Among the enzymes to be stimulated by the calmodulin-Ca(2+) complex are a number of protein kinases and phosphatases. This Heterocapsa triquetra (Dinoflagellate) protein is Calmodulin.